Consider the following 541-residue polypeptide: Chaperonin GroEL 2 (541 aa).

ATP contacts are provided by residues 29–32 (TLGP), 86–90 (DGTTT), Gly413, 477–479 (NAA), and Asp493.

This sequence belongs to the chaperonin (HSP60) family. In terms of assembly, forms a cylinder of 14 subunits composed of two heptameric rings stacked back-to-back. Interacts with the co-chaperonin GroES.

The protein localises to the cytoplasm. The catalysed reaction is ATP + H2O + a folded polypeptide = ADP + phosphate + an unfolded polypeptide.. In terms of biological role, together with its co-chaperonin GroES, plays an essential role in assisting protein folding. The GroEL-GroES system forms a nano-cage that allows encapsulation of the non-native substrate proteins and provides a physical environment optimized to promote and accelerate protein folding. This is Chaperonin GroEL 2 from Nocardioides sp. (strain ATCC BAA-499 / JS614).